A 59-amino-acid polypeptide reads, in one-letter code: Toxin TxpA (59 aa).

The helical transmembrane segment at 7-27 threads the bilayer; the sequence is LMVMIGFANLIGGIMTWVISL.

Its subcellular location is the cell membrane. Functionally, toxic component of a type I toxin-antitoxin (TA) system. Overexpression of txpA causes cell lysis; the TxpA protein has been suggested to act on the cell membrane or might possibly block cell wall synthesis. Overexpression in E.coli is not toxic. The sequence is that of Toxin TxpA from Bacillus subtilis (strain 168).